The primary structure comprises 489 residues: Betaine aldehyde dehydrogenase (489 aa).

K(+) contacts are provided by T26 and D93. 150-152 (GAW) is an NAD(+) binding site. Catalysis depends on K162, which acts as the Charge relay system. NAD(+) is bound at residue 176–179 (KPSE). V180 is a K(+) binding site. 229–232 (GVET) contacts NAD(+). L245 contributes to the K(+) binding site. E251 serves as the catalytic Proton acceptor. Positions 253, 285, and 386 each coordinate NAD(+). C285 acts as the Nucleophile in catalysis. C285 carries the post-translational modification Cysteine sulfenic acid (-SOH). 2 residues coordinate K(+): K456 and G459. Residue E463 is the Charge relay system of the active site.

This sequence belongs to the aldehyde dehydrogenase family. In terms of assembly, dimer of dimers. The cofactor is K(+).

The enzyme catalyses betaine aldehyde + NAD(+) + H2O = glycine betaine + NADH + 2 H(+). It functions in the pathway amine and polyamine biosynthesis; betaine biosynthesis via choline pathway; betaine from betaine aldehyde: step 1/1. Functionally, involved in the biosynthesis of the osmoprotectant glycine betaine. Catalyzes the irreversible oxidation of betaine aldehyde to the corresponding acid. The chain is Betaine aldehyde dehydrogenase from Burkholderia orbicola (strain MC0-3).